We begin with the raw amino-acid sequence, 310 residues long: Protein-L-isoaspartate O-methyltransferase (310 aa).

2 disordered regions span residues 1 to 46 (MSGE…DKPA) and 60 to 79 (ALPGTAAAKPATAPKPTVLK). Residues 14 to 34 (EDLKRAPRKSEVRSGSGERHA) are compositionally biased toward basic and acidic residues. Positions 35–46 (ASAVPKAADKPA) are enriched in low complexity. Residue Ser157 is part of the active site.

It belongs to the methyltransferase superfamily. L-isoaspartyl/D-aspartyl protein methyltransferase family.

It is found in the cytoplasm. The enzyme catalyses [protein]-L-isoaspartate + S-adenosyl-L-methionine = [protein]-L-isoaspartate alpha-methyl ester + S-adenosyl-L-homocysteine. Its function is as follows. Catalyzes the methyl esterification of L-isoaspartyl residues in peptides and proteins that result from spontaneous decomposition of normal L-aspartyl and L-asparaginyl residues. It plays a role in the repair and/or degradation of damaged proteins. The chain is Protein-L-isoaspartate O-methyltransferase from Burkholderia ambifaria (strain ATCC BAA-244 / DSM 16087 / CCUG 44356 / LMG 19182 / AMMD) (Burkholderia cepacia (strain AMMD)).